The sequence spans 338 residues: 4-hydroxythreonine-4-phosphate dehydrogenase (338 aa).

Substrate is bound by residues His-140 and Thr-141. 3 residues coordinate a divalent metal cation: His-172, His-217, and His-271. Substrate is bound by residues Lys-279, Asn-288, and Arg-297.

It belongs to the PdxA family. As to quaternary structure, homodimer. A divalent metal cation is required as a cofactor.

Its subcellular location is the cytoplasm. It catalyses the reaction 4-(phosphooxy)-L-threonine + NAD(+) = 3-amino-2-oxopropyl phosphate + CO2 + NADH. It functions in the pathway cofactor biosynthesis; pyridoxine 5'-phosphate biosynthesis; pyridoxine 5'-phosphate from D-erythrose 4-phosphate: step 4/5. Functionally, catalyzes the NAD(P)-dependent oxidation of 4-(phosphooxy)-L-threonine (HTP) into 2-amino-3-oxo-4-(phosphooxy)butyric acid which spontaneously decarboxylates to form 3-amino-2-oxopropyl phosphate (AHAP). In Prosthecochloris aestuarii (strain DSM 271 / SK 413), this protein is 4-hydroxythreonine-4-phosphate dehydrogenase.